Reading from the N-terminus, the 927-residue chain is DNA mismatch repair protein MutS (927 aa).

ATP is bound at residue 646-653 (GPNMAGKS). The interval 904–927 (SAQPGSAEQGESPDKHDEGKNSRG) is disordered. Residues 915-927 (SPDKHDEGKNSRG) are compositionally biased toward basic and acidic residues.

Belongs to the DNA mismatch repair MutS family.

This protein is involved in the repair of mismatches in DNA. It is possible that it carries out the mismatch recognition step. This protein has a weak ATPase activity. The chain is DNA mismatch repair protein MutS from Desulfovibrio desulfuricans (strain ATCC 27774 / DSM 6949 / MB).